The following is a 783-amino-acid chain: MRVADVPGLPGGVADHFEGEGVEELYPPQAEAVERGVTEGANLVASVPTASGKTLIAQLAMLSAIAEGGDSPTFSGDGTALYIVPLRALAGEKAQEFEAFERFGLSVGVSTGNYERDGARLADNDIVVATSEKVDSLVRNGAGWIDDLSCVVADEVHLVDDDHRGPTLEVTLAKLRQQVADLQVVALSATVGNAGELAAWLDAELVDSDWRPIELRTGVHYGQSLHYDDGTQAELSVGSGSQTAAVVADTLADDGSTLVFVNSRRNAEASARRLADVTGNALSSAERERLADIAAEIRGVSDTETSDELADAVASGAAFHHAGLAREHRELVEEAFRDRLVKAVSATPTLAAGVNTPARRVVVRDWQRYDGTAGGMQPLDVLEVHQMFGRAGRPGLDPYGEAVLLANSHDELEELFDRYVYADPEPVRSKLAAEPALRTHVLAAIATGFTTTEDGLHEFLGGTLYATQTDDTGRLRSVTGDVLRYLDRNGFVERDGAALRATATGQLVSRLYVDPMSAATIIDGLRDAARDATETDDEGAFRPASELGDDAALPADASVEPTPLGLYHLVSRTPDMYELYLRSGDREQYTEVAYEHEDELLGATPREEQAEFEDWLSALKTARLMADWASELDEERIAERYDVGPGDIRGKVETAEWLLNAAERLAGELDVECGPAVREARKRVQYGVREELLGLAGVRNVGRKRARRLYNAGVESRADLRNADKGVVLGAVRGRAATAERILETVGHPDPGMDGVAADTDAAPESGGEAGGDEGQASLGDFS.

ATP is bound by residues Gln29 and 47–54; that span reads VPTASGKT. In terms of domain architecture, Helicase ATP-binding spans 34–209; sequence ERGVTEGANL…WLDAELVDSD (176 aa). The DEAH box signature appears at 154–157; that stretch reads DEVH. One can recognise a Helicase C-terminal domain in the interval 242–443; the sequence is QTAAVVADTL…EPALRTHVLA (202 aa). The disordered stretch occupies residues 744-783; it reads ETVGHPDPGMDGVAADTDAAPESGGEAGGDEGQASLGDFS.

This sequence belongs to the helicase family. Hel308 subfamily. In terms of assembly, monomer.

It carries out the reaction Couples ATP hydrolysis with the unwinding of duplex DNA by translocating in the 3'-5' direction.. The catalysed reaction is ATP + H2O = ADP + phosphate + H(+). Its function is as follows. DNA-dependent ATPase and 3'-5' DNA helicase that may be involved in repair of stalled replication forks. The chain is ATP-dependent DNA helicase Hel308 from Halobacterium salinarum (strain ATCC 700922 / JCM 11081 / NRC-1) (Halobacterium halobium).